Consider the following 466-residue polypeptide: 3-isopropylmalate dehydratase large subunit (466 aa).

The [4Fe-4S] cluster site is built by Cys347, Cys407, and Cys410.

The protein belongs to the aconitase/IPM isomerase family. LeuC type 1 subfamily. Heterodimer of LeuC and LeuD. It depends on [4Fe-4S] cluster as a cofactor.

The catalysed reaction is (2R,3S)-3-isopropylmalate = (2S)-2-isopropylmalate. Its pathway is amino-acid biosynthesis; L-leucine biosynthesis; L-leucine from 3-methyl-2-oxobutanoate: step 2/4. Functionally, catalyzes the isomerization between 2-isopropylmalate and 3-isopropylmalate, via the formation of 2-isopropylmaleate. The protein is 3-isopropylmalate dehydratase large subunit of Citrobacter koseri (strain ATCC BAA-895 / CDC 4225-83 / SGSC4696).